Here is a 677-residue protein sequence, read N- to C-terminus: Methionine--tRNA ligase (677 aa).

The 'HIGH' region motif lies at 15 to 25; sequence PYANGSIHLGH. Cys146, Cys149, Cys159, and Cys162 together coordinate Zn(2+). The 'KMSKS' region motif lies at 333–337; sequence KMSKS. Lys336 serves as a coordination point for ATP. A tRNA-binding domain is found at 575–677; it reads DFAKVDLRVA…AGAKPGHQVK (103 aa).

Belongs to the class-I aminoacyl-tRNA synthetase family. MetG type 1 subfamily. In terms of assembly, homodimer. Zn(2+) serves as cofactor.

It localises to the cytoplasm. It carries out the reaction tRNA(Met) + L-methionine + ATP = L-methionyl-tRNA(Met) + AMP + diphosphate. Its function is as follows. Is required not only for elongation of protein synthesis but also for the initiation of all mRNA translation through initiator tRNA(fMet) aminoacylation. This is Methionine--tRNA ligase from Shigella sonnei (strain Ss046).